A 119-amino-acid polypeptide reads, in one-letter code: MNPEEIRQRRLQEMQAKAQEQGAANDPEAQRQAQEQQMQYEMQKQKILRQILSEDARSRLARIKLAKPQFAEQVEMQLIQLAQAGKLPIPLTDEYFKGLLDRIYEMNKPAKKEITIMRR.

The segment covering 1 to 12 (MNPEEIRQRRLQ) has biased composition (basic and acidic residues). The interval 1–37 (MNPEEIRQRRLQEMQAKAQEQGAANDPEAQRQAQEQQ) is disordered.

The protein belongs to the PDCD5 family.

The chain is DNA-binding protein MmarC7_1157 from Methanococcus maripaludis (strain C7 / ATCC BAA-1331).